Consider the following 134-residue polypeptide: Translation initiation factor 2 subunit beta (134 aa).

Residues 1–12 (MGYEEQLDRALE) are compositionally biased toward basic and acidic residues. The segment at 1–32 (MGYEEQLDRALEETPDIEGTAARFSVPDPDVR) is disordered.

The protein belongs to the eIF-2-beta/eIF-5 family. As to quaternary structure, heterotrimer composed of an alpha, a beta and a gamma chain.

Its function is as follows. eIF-2 functions in the early steps of protein synthesis by forming a ternary complex with GTP and initiator tRNA. The sequence is that of Translation initiation factor 2 subunit beta from Natronomonas pharaonis (strain ATCC 35678 / DSM 2160 / CIP 103997 / JCM 8858 / NBRC 14720 / NCIMB 2260 / Gabara) (Halobacterium pharaonis).